A 530-amino-acid chain; its full sequence is Ankyrin repeat domain-containing protein 53 (530 aa).

Low complexity predominate over residues 1–15 (MASAGSTARRAGSGS). The interval 1–99 (MASAGSTARR…PSPSKESDQT (99 aa)) is disordered. Over residues 32–41 (PSGSMQQANK) the composition is skewed to polar residues. ANK repeat units follow at residues 139-169 (KGFTAIHFAAQWGKLACLQVLVEEYKFPVDL), 173-206 (NSQTPLHLVIHRDNTTVALPCIYYLLEKGADLNA), and 210-239 (NGSTPLHLAARDGLLDCVKVLVQSGANVHA). Disordered stretches follow at residues 323-360 (GHSLVSNTKQARATALSKTPEQRESQRSRSFHPSVDAR) and 383-402 (PTMWNVSNNPARPPTTQISH). Composition is skewed to polar residues over residues 326–341 (LVSNTKQARATALSKT) and 386–402 (WNVSNNPARPPTTQISH).

As to quaternary structure, interacts with PSRC1; recruited by PSRC1 to the spindle during mitosis. Phosphorylated during mitosis.

It localises to the cytoplasm. The protein resides in the cytoskeleton. Its subcellular location is the spindle. The protein localises to the spindle pole. Required for normal progression through mitosis. Involved in chromosome alignment and cytokinesis via regulation of microtubules polymerization. In Homo sapiens (Human), this protein is Ankyrin repeat domain-containing protein 53 (ANKRD53).